The following is a 93-amino-acid chain: Vacuolar ATPase assembly integral membrane protein VMA21 (93 aa).

At 1–21 (MSNRVSTGKMAMAPQESVQPA) the chain is on the cytoplasmic side. The chain crosses the membrane as a helical span at residues 22-42 (VLYKLVLFALLMAVVPIGTYF). The Lumenal segment spans residues 43–54 (STLNYLWDGSTT). A helical transmembrane segment spans residues 55–75 (FAAISAIAAANLILVGYVVVA). Over 76 to 93 (FREDAASRTGPLPEKKTS) the chain is Cytoplasmic. The Prevents secretion from ER motif lies at 90–93 (KKTS).

It belongs to the VMA21 family.

It localises to the endoplasmic reticulum membrane. The protein localises to the endoplasmic reticulum-Golgi intermediate compartment membrane. The protein resides in the cytoplasmic vesicle. It is found in the COPII-coated vesicle membrane. In terms of biological role, required for the assembly of the V0 complex of the vacuolar ATPase (V-ATPase) in the endoplasmic reticulum. This is Vacuolar ATPase assembly integral membrane protein VMA21 from Cryptococcus neoformans var. neoformans serotype D (strain JEC21 / ATCC MYA-565) (Filobasidiella neoformans).